The primary structure comprises 426 residues: Arrestin domain-containing protein 17 (426 aa).

The span at 320–329 (QSAGNGSLPK) shows a compositional bias: polar residues. A disordered region spans residues 320-340 (QSAGNGSLPKSSIKDSPPKWD). Positions 331–340 (SIKDSPPKWD) are enriched in basic and acidic residues.

It belongs to the arrestin family. In terms of assembly, interacts with tax-6. Post-translationally, phosphorylated. Dephosphorylated by tax-6 in vitro. In terms of tissue distribution, expressed from the comma stage to adulthood in the nervous system, including sensory neurons and interneurons posterior to the nerve ring, dorsal and ventral nerve cords, tail ganglia and, CEP, HSN, ASK, ADL, ASH and ASJ neurons.

Involved in several behavioral responses including chemotaxis towards lysine and adaptation to repeated osmotic stress. In addition, plays a role in resuming egg-laying and locomotion after starvation. This chain is Arrestin domain-containing protein 17, found in Caenorhabditis elegans.